A 151-amino-acid polypeptide reads, in one-letter code: Small ribosomal subunit protein bS6 (151 aa).

Residues 97-151 (EAEPSAMMQKRDRDDRKDRDRGDRPRRRDDDFGGGDRGDRGDRGDRPERNFGGEN) are disordered. A compositionally biased stretch (basic and acidic residues) spans 105 to 151 (QKRDRDDRKDRDRGDRPRRRDDDFGGGDRGDRGDRGDRPERNFGGEN).

This sequence belongs to the bacterial ribosomal protein bS6 family.

Binds together with bS18 to 16S ribosomal RNA. In Methylorubrum extorquens (strain CM4 / NCIMB 13688) (Methylobacterium extorquens), this protein is Small ribosomal subunit protein bS6.